Here is a 494-residue protein sequence, read N- to C-terminus: Glutamyl-tRNA reductase (494 aa).

Substrate contacts are provided by residues 58 to 61, serine 118, 123 to 125, and glutamine 129; these read TCNR and EQQ. Cysteine 59 serves as the catalytic Nucleophile. Residue 205–210 participates in NADP(+) binding; the sequence is GAGAMA. Positions 448–494 are disordered; it reads KGANAGSGQRKKQKPQENRVSTARAVYRSTYQDLTQASTPGGKDDDQ. Residues 476 to 486 show a composition bias toward polar residues; that stretch reads STYQDLTQAST.

The protein belongs to the glutamyl-tRNA reductase family. Homodimer.

It catalyses the reaction (S)-4-amino-5-oxopentanoate + tRNA(Glu) + NADP(+) = L-glutamyl-tRNA(Glu) + NADPH + H(+). It participates in porphyrin-containing compound metabolism; protoporphyrin-IX biosynthesis; 5-aminolevulinate from L-glutamyl-tRNA(Glu): step 1/2. Catalyzes the NADPH-dependent reduction of glutamyl-tRNA(Glu) to glutamate 1-semialdehyde (GSA). This chain is Glutamyl-tRNA reductase, found in Corynebacterium urealyticum (strain ATCC 43042 / DSM 7109).